The sequence spans 1452 residues: ABC multidrug transporter A-1 (1452 aa).

Residues 1-20 form a disordered region; it reads MNESHEAGKNSSTNVEEREE. Asn2, Asn10, Asn228, Asn287, and Asn311 each carry an N-linked (GlcNAc...) asparagine glycan. One can recognise an ABC transporter 1 domain in the interval 110–363; it reads LKTLSLARIA…FLQMGFVCPD (254 aa). A run of 6 helical transmembrane segments spans residues 474-494, 508-528, 554-574, 583-603, 616-636, and 725-745; these read VTIS…SIFY, ALLF…MLTL, MIMD…VLYF, GAFF…SMFF, VLPF…FAIP, and IGVI…ATDF. The ABC transporter 2 domain maps to 802-1044; it reads FQWKDVCFDI…ILIDYFVRNG (243 aa). Residue 838 to 845 participates in ATP binding; it reads GVSGAGKT. A run of 6 helical transmembrane segments spans residues 1153–1173, 1183–1203, 1223–1243, 1271–1291, 1297–1317, and 1324–1344; these read ALCV…PNTI, IFML…HFVA, FLIA…VLMF, LMIW…IAAF, AGNL…VLAT, and FWIF…MLSV. Asn1350, Asn1365, and Asn1391 each carry an N-linked (GlcNAc...) asparagine glycan. The helical transmembrane segment at 1418–1438 threads the bilayer; the sequence is FGLMWVFIVFNIFAACSLYWW.

This sequence belongs to the ABC transporter superfamily. ABCG family. PDR (TC 3.A.1.205) subfamily.

The protein localises to the membrane. Its function is as follows. ABC transporter that seems not to be involved in the efflux of toxic substances, at least not the classical compounds such as itraconazole, amphotericin B, voriconazole, posaconazole, ravuconazole, or echinocandins. The polypeptide is ABC multidrug transporter A-1 (Aspergillus fumigatus (strain ATCC MYA-4609 / CBS 101355 / FGSC A1100 / Af293) (Neosartorya fumigata)).